Consider the following 208-residue polypeptide: Mediator of RNA polymerase II transcription subunit 18 (208 aa).

Ser66 bears the Phosphoserine mark.

This sequence belongs to the Mediator complex subunit 18 family. Component of the Mediator complex, which is composed of MED1, MED4, MED6, MED7, MED8, MED9, MED10, MED11, MED12, MED13, MED13L, MED14, MED15, MED16, MED17, MED18, MED19, MED20, MED21, MED22, MED23, MED24, MED25, MED26, MED27, MED29, MED30, MED31, CCNC, CDK8 and CDC2L6/CDK11. The MED12, MED13, CCNC and CDK8 subunits form a distinct module termed the CDK8 module. Mediator containing the CDK8 module is less active than Mediator lacking this module in supporting transcriptional activation. Individual preparations of the Mediator complex lacking one or more distinct subunits have been variously termed ARC, CRSP, DRIP, PC2, SMCC and TRAP.

Its subcellular location is the nucleus. In terms of biological role, component of the Mediator complex, a coactivator involved in the regulated transcription of nearly all RNA polymerase II-dependent genes. Mediator functions as a bridge to convey information from gene-specific regulatory proteins to the basal RNA polymerase II transcription machinery. Mediator is recruited to promoters by direct interactions with regulatory proteins and serves as a scaffold for the assembly of a functional preinitiation complex with RNA polymerase II and the general transcription factors. This Mus musculus (Mouse) protein is Mediator of RNA polymerase II transcription subunit 18 (Med18).